The sequence spans 565 residues: Sulfite reductase [NADPH] hemoprotein beta-component (565 aa).

Cys-429, Cys-435, Cys-474, and Cys-478 together coordinate [4Fe-4S] cluster. A siroheme-binding site is contributed by Cys-478.

The protein belongs to the nitrite and sulfite reductase 4Fe-4S domain family. Alpha(8)-beta(8). The alpha component is a flavoprotein, the beta component is a hemoprotein. The cofactor is siroheme. Requires [4Fe-4S] cluster as cofactor.

The enzyme catalyses hydrogen sulfide + 3 NADP(+) + 3 H2O = sulfite + 3 NADPH + 4 H(+). The protein operates within sulfur metabolism; hydrogen sulfide biosynthesis; hydrogen sulfide from sulfite (NADPH route): step 1/1. In terms of biological role, component of the sulfite reductase complex that catalyzes the 6-electron reduction of sulfite to sulfide. This is one of several activities required for the biosynthesis of L-cysteine from sulfate. The sequence is that of Sulfite reductase [NADPH] hemoprotein beta-component from Shewanella piezotolerans (strain WP3 / JCM 13877).